Consider the following 160-residue polypeptide: Arsenate reductase 2.1 (160 aa).

The region spanning 42–143 (SNPRVAIIDV…WELSGQPVCR (102 aa)) is the Rhodanese domain. The Cysteine persulfide intermediate role is filled by Cys94.

The catalysed reaction is [glutaredoxin]-dithiol + arsenate + glutathione + H(+) = glutathionyl-S-S-[glutaredoxin] + arsenite + H2O. Functionally, possesses arsenate reductase activity in vitro. Catalyzes the reduction of arsenate [As(V)] to arsenite [As(III)]. May play a role in arsenic retention in roots. In terms of biological role, possesses phosphatase activity towards p-nitrophenyl phosphate in vitro. In Oryza sativa subsp. japonica (Rice), this protein is Arsenate reductase 2.1 (ACR2.1).